Consider the following 212-residue polypeptide: Thymidylate kinase (212 aa).

11 to 18 (GPEGAGKT) provides a ligand contact to ATP.

This sequence belongs to the thymidylate kinase family.

It catalyses the reaction dTMP + ATP = dTDP + ADP. Phosphorylation of dTMP to form dTDP in both de novo and salvage pathways of dTTP synthesis. This chain is Thymidylate kinase, found in Streptococcus pneumoniae (strain Taiwan19F-14).